A 169-amino-acid polypeptide reads, in one-letter code: Fumarase E (169 aa).

It belongs to the MtlR/FumE family.

It carries out the reaction (S)-malate = fumarate + H2O. In vitro catalyzes the addition of water to fumarate, forming malate. Cannot catalyze the reverse reaction. Cannot use the cis-isomer maleate as substrate. This chain is Fumarase E, found in Escherichia coli (strain K12).